The sequence spans 495 residues: Steroid 21-hydroxylase (495 aa).

Positions 92 and 121 each coordinate heme b. R234 is a 17alpha-hydroxyprogesterone binding site. Residue R234 coordinates progesterone. Residues H366, R427, and C429 each coordinate heme b.

Belongs to the cytochrome P450 family. Heme b serves as cofactor.

The protein localises to the endoplasmic reticulum membrane. Its subcellular location is the microsome membrane. It carries out the reaction progesterone + reduced [NADPH--hemoprotein reductase] + O2 = 21-hydroxyprogesterone + oxidized [NADPH--hemoprotein reductase] + H2O + H(+). It catalyses the reaction 17alpha-hydroxyprogesterone + reduced [NADPH--hemoprotein reductase] + O2 = 11-deoxycortisol + oxidized [NADPH--hemoprotein reductase] + H2O + H(+). Its function is as follows. A cytochrome P450 monooxygenase that plays a major role in adrenal steroidogenesis. Catalyzes the hydroxylation at C-21 of progesterone and 17alpha-hydroxyprogesterone to respectively form 11-deoxycorticosterone and 11-deoxycortisol, intermediate metabolites in the biosynthetic pathway of mineralocorticoids and glucocorticoids. Mechanistically, uses molecular oxygen inserting one oxygen atom into a substrate, and reducing the second into a water molecule, with two electrons provided by NADPH via cytochrome P450 reductase (CPR; NADPH-ferrihemoprotein reductase). The sequence is that of Steroid 21-hydroxylase (CYP21A2) from Homo sapiens (Human).